A 368-amino-acid polypeptide reads, in one-letter code: MNNKIALYCRSGFEKECAAEITEKAAQLEIFGFARVKENSGYVLFECYQLEDADRLIREIPFREFIFARQMMVVGELLKDLPPEDRVSPIVGMLVGVIEKAGELRVEVADTNESKELLKFCRKLTVPLRSALREQKILSARENAHRPVVHVFFIAPGCCYVGYSYSNNNSPFYMGIPRLKFPSDAPSRSTLKLEEAFHVFIPADEWEERLASGMHAVDLGACPGGWTYQLVQRSMMIQAVDNGLMAQSLMDTGQVTHHRADGFKYEPTRSNIYWLVCDMVEKPTKVTQLITKWLVNGWCREAIFNLKLPMKKRYEEVVQNLAMMDEQLKENGINADIHAKQLYHDREEVTVHVRRIWSGAPGRRDERY.

S-adenosyl-L-methionine-binding positions include Ser-189, 222-225, Asp-241, Asp-261, and Asp-278; that span reads CPGG. Lys-307 (proton acceptor) is an active-site residue.

This sequence belongs to the class I-like SAM-binding methyltransferase superfamily. RNA methyltransferase RlmE family. RlmM subfamily. As to quaternary structure, monomer.

The protein resides in the cytoplasm. It catalyses the reaction cytidine(2498) in 23S rRNA + S-adenosyl-L-methionine = 2'-O-methylcytidine(2498) in 23S rRNA + S-adenosyl-L-homocysteine + H(+). In terms of biological role, catalyzes the 2'-O-methylation at nucleotide C2498 in 23S rRNA. The sequence is that of Ribosomal RNA large subunit methyltransferase M from Yersinia pseudotuberculosis serotype O:1b (strain IP 31758).